The sequence spans 345 residues: Phosphoribosylformylglycinamidine cyclo-ligase (345 aa).

It belongs to the AIR synthase family.

Its subcellular location is the cytoplasm. It carries out the reaction 2-formamido-N(1)-(5-O-phospho-beta-D-ribosyl)acetamidine + ATP = 5-amino-1-(5-phospho-beta-D-ribosyl)imidazole + ADP + phosphate + H(+). It participates in purine metabolism; IMP biosynthesis via de novo pathway; 5-amino-1-(5-phospho-D-ribosyl)imidazole from N(2)-formyl-N(1)-(5-phospho-D-ribosyl)glycinamide: step 2/2. The polypeptide is Phosphoribosylformylglycinamidine cyclo-ligase (Shewanella baltica (strain OS185)).